The following is a 391-amino-acid chain: Carbamoyl phosphate synthase small chain (391 aa).

Residues 1 to 199 are CPSase; the sequence is MVRISGFCCA…TWEFIEGPTT (199 aa). L-glutamine contacts are provided by serine 61, glycine 251, and glycine 253. The region spanning 203 to 388 is the Glutamine amidotransferase type-1 domain; sequence TVVAIDFGVK…VALMRDRQPT (186 aa). Residue cysteine 279 is the Nucleophile of the active site. L-glutamine-binding residues include leucine 280, glutamine 283, asparagine 319, glycine 321, and phenylalanine 322. Residues histidine 361 and glutamate 363 contribute to the active site.

The protein belongs to the CarA family. In terms of assembly, composed of two chains; the small (or glutamine) chain promotes the hydrolysis of glutamine to ammonia, which is used by the large (or ammonia) chain to synthesize carbamoyl phosphate. Tetramer of heterodimers (alpha,beta)4.

It catalyses the reaction hydrogencarbonate + L-glutamine + 2 ATP + H2O = carbamoyl phosphate + L-glutamate + 2 ADP + phosphate + 2 H(+). It carries out the reaction L-glutamine + H2O = L-glutamate + NH4(+). It functions in the pathway amino-acid biosynthesis; L-arginine biosynthesis; carbamoyl phosphate from bicarbonate: step 1/1. Its pathway is pyrimidine metabolism; UMP biosynthesis via de novo pathway; (S)-dihydroorotate from bicarbonate: step 1/3. Small subunit of the glutamine-dependent carbamoyl phosphate synthetase (CPSase). CPSase catalyzes the formation of carbamoyl phosphate from the ammonia moiety of glutamine, carbonate, and phosphate donated by ATP, constituting the first step of 2 biosynthetic pathways, one leading to arginine and/or urea and the other to pyrimidine nucleotides. The small subunit (glutamine amidotransferase) binds and cleaves glutamine to supply the large subunit with the substrate ammonia. This Synechococcus sp. (strain ATCC 27144 / PCC 6301 / SAUG 1402/1) (Anacystis nidulans) protein is Carbamoyl phosphate synthase small chain.